The primary structure comprises 402 residues: 5-methylphenazine-1-carboxylate 1-monooxygenase (402 aa).

Residues 14–15 (IG), 35–36 (ES), 43–45 (LGV), Arg-106, Val-132, Arg-191, and Asp-310 contribute to the FAD site. The span at 368–385 (REKEEWAAASRPKTEKSA) shows a compositional bias: basic and acidic residues. The interval 368 to 402 (REKEEWAAASRPKTEKSAALEAITGSYRNQVERPR) is disordered.

In terms of assembly, monomer in solution. Probably interacts transiently with PhzM. Requires FAD as cofactor.

It carries out the reaction 5-methyl-phenazine-1-carboxylate + NADH + O2 + 2 H(+) = pyocyanin + CO2 + NAD(+) + H2O. It participates in secondary metabolite biosynthesis; pyocyanine biosynthesis. Its function is as follows. Involved in the biosynthesis of pyocyanine, a blue-pigmented phenazine derivative, which plays a role in virulence. Catalyzes the oxidative decarboxylation of 5-methylphenazine-1-carboxylate (5-methyl-PCA) to pyocyanine. Can also act on phenazine-1-carboxylate (PCA), converting it into 1-hydroxyphenazine (1-HP). However, PCA is a poor substrate. This chain is 5-methylphenazine-1-carboxylate 1-monooxygenase, found in Pseudomonas aeruginosa (strain ATCC 15692 / DSM 22644 / CIP 104116 / JCM 14847 / LMG 12228 / 1C / PRS 101 / PAO1).